Here is a 297-residue protein sequence, read N- to C-terminus: 4-hydroxy-tetrahydrodipicolinate synthase (297 aa).

Thr-55 provides a ligand contact to pyruvate. Tyr-144 acts as the Proton donor/acceptor in catalysis. Lys-172 acts as the Schiff-base intermediate with substrate in catalysis. Residue Ile-213 coordinates pyruvate.

It belongs to the DapA family. Homotetramer; dimer of dimers.

The protein resides in the cytoplasm. It catalyses the reaction L-aspartate 4-semialdehyde + pyruvate = (2S,4S)-4-hydroxy-2,3,4,5-tetrahydrodipicolinate + H2O + H(+). It participates in amino-acid biosynthesis; L-lysine biosynthesis via DAP pathway; (S)-tetrahydrodipicolinate from L-aspartate: step 3/4. Its function is as follows. Catalyzes the condensation of (S)-aspartate-beta-semialdehyde [(S)-ASA] and pyruvate to 4-hydroxy-tetrahydrodipicolinate (HTPA). The polypeptide is 4-hydroxy-tetrahydrodipicolinate synthase (Lactococcus lactis subsp. cremoris (strain SK11)).